The following is a 494-amino-acid chain: PTS system cellobiose-specific EIIC component (494 aa).

One can recognise a PTS EIIC type-3 domain in the interval 8–481 (MEKYLVPVAA…IITFVIWVPF (474 aa)). The next 9 helical transmembrane spans lie at 32 to 52 (FIGM…SAIV), 92 to 112 (ISAL…AFSW), 119 to 139 (AYGV…FAGL), 188 to 208 (AYFT…KLML), 227 to 247 (FLAI…YYII), 274 to 294 (IFSV…GLHG), 355 to 375 (AFAW…IILF), 406 to 426 (VVLN…SVII), and 463 to 483 (AIVL…PFVI).

It is found in the cell membrane. Its function is as follows. The phosphoenolpyruvate-dependent sugar phosphotransferase system (PTS), a major carbohydrate active transport system, catalyzes the phosphorylation of incoming sugar substrates concomitant with their translocation across the cell membrane. Involved in cellobiose transport with PtcA and PtcB. This system can also transport lactose. This is PTS system cellobiose-specific EIIC component from Lactococcus lactis subsp. lactis (strain IL1403) (Streptococcus lactis).